Here is a 351-residue protein sequence, read N- to C-terminus: MKPRVRSEFVKSGYVFAKSPADIAKEYGFTEVAMLGSNENPYPPSDKVLRAAEAELSGVNRYPDPKAAAFHAALRTYICDCPVVTSGLGMDGVIETVIRTIVEPGDKVVISTPTFSMYGLAAKAASARVVNVSRSADFSVDLDTFLNEAKDARLSFLCTPNNPTGTVTPVEDIEYILDRIEGVLFLDCAYVEFSDINYLPLLSRDNLIIGRTMSKVYGLAGLRIGYAFVPEWLEAPYNIAATPFTMNRLSEAAASVAVSDAAYRESFIAHVQKWRDVFMQEIPFPVYPSGSNFILINVAPQKGDAAAESLAKHGVLVRSCTSFPGLGDTFIRVSVGADWENERFLAAVKKL.

Lys-215 bears the N6-(pyridoxal phosphate)lysine mark.

Belongs to the class-II pyridoxal-phosphate-dependent aminotransferase family. Histidinol-phosphate aminotransferase subfamily. It depends on pyridoxal 5'-phosphate as a cofactor.

It catalyses the reaction L-histidinol phosphate + 2-oxoglutarate = 3-(imidazol-4-yl)-2-oxopropyl phosphate + L-glutamate. It functions in the pathway amino-acid biosynthesis; L-histidine biosynthesis; L-histidine from 5-phospho-alpha-D-ribose 1-diphosphate: step 7/9. The polypeptide is Histidinol-phosphate aminotransferase (Methanocorpusculum labreanum (strain ATCC 43576 / DSM 4855 / Z)).